The primary structure comprises 197 residues: Small ribosomal subunit protein uS5 (197 aa).

The span at 1-17 (MAERENRGRGRGRNREE) shows a compositional bias: basic and acidic residues. Disordered stretches follow at residues 1 to 22 (MAERENRGRGRGRNREEETPEF) and 158 to 197 (NESSPRQVASRRGKKVADILPKRDDHPQIDGEQAPVSEEA). Residues 22-85 (FADRLVAINR…EQAKRQLIRV (64 aa)) enclose the S5 DRBM domain. The span at 172–186 (KVADILPKRDDHPQI) shows a compositional bias: basic and acidic residues.

The protein belongs to the universal ribosomal protein uS5 family. In terms of assembly, part of the 30S ribosomal subunit. Contacts proteins S4 and S8.

Its function is as follows. With S4 and S12 plays an important role in translational accuracy. Located at the back of the 30S subunit body where it stabilizes the conformation of the head with respect to the body. The protein is Small ribosomal subunit protein uS5 of Jannaschia sp. (strain CCS1).